A 551-amino-acid polypeptide reads, in one-letter code: Adenylosuccinate synthetase (551 aa).

GTP-binding positions include 131–137 (GDEGKGK) and 159–161 (GHT). Asp132 acts as the Proton acceptor in catalysis. Mg(2+) is bound by residues Asp132 and Gly159. IMP-binding positions include 132–135 (DEGK), 157–160 (NAGH), Thr248, Arg262, Asn339, Thr354, and Arg418. Residue His160 is the Proton donor of the active site. 414 to 420 (TTTGRAR) provides a ligand contact to substrate. GTP-binding positions include Arg420, 446–448 (KLD), and 528–530 (GVG).

The protein belongs to the adenylosuccinate synthetase family. As to quaternary structure, homodimer. Mg(2+) is required as a cofactor.

It is found in the cytoplasm. It catalyses the reaction IMP + L-aspartate + GTP = N(6)-(1,2-dicarboxyethyl)-AMP + GDP + phosphate + 2 H(+). It functions in the pathway purine metabolism; AMP biosynthesis via de novo pathway; AMP from IMP: step 1/2. Plays an important role in the de novo pathway and in the salvage pathway of purine nucleotide biosynthesis. Catalyzes the first committed step in the biosynthesis of AMP from IMP. This chain is Adenylosuccinate synthetase, found in Phytophthora infestans (strain T30-4) (Potato late blight agent).